The sequence spans 513 residues: Serine/threonine-protein phosphatase T (513 aa).

TPR repeat units follow at residues 12–45 (ALER…DSTQ), 46–79 (SIYF…DPKN), and 80–113 (IKAY…KPND). The segment at 188–513 (KNMSQEFISK…MAYSNGGFGL (326 aa)) is catalytic. D249, H251, D278, and N310 together coordinate Mn(2+). Residue H311 is the Proton donor/acceptor of the active site. Positions 359 and 434 each coordinate Mn(2+).

This sequence belongs to the PPP phosphatase family. PP-5 (PP-T) subfamily. In terms of assembly, interacts (via TPR repeats) with HSP82 (via C-terminal MEEVD pentapeptide). Mg(2+) serves as cofactor. Mn(2+) is required as a cofactor.

The protein resides in the nucleus. It carries out the reaction O-phospho-L-seryl-[protein] + H2O = L-seryl-[protein] + phosphate. The enzyme catalyses O-phospho-L-threonyl-[protein] + H2O = L-threonyl-[protein] + phosphate. Its activity is regulated as follows. Stimulated by arachidonic acid and other unsaturated fatty acids, and by arachidoyl coenzyme A. In terms of biological role, protein phosphatase that specifically binds to and dephosphorylates the molecular chaperone Hsp90 (HSC82 and HSP82). Dephosphorylation positively regulates the Hsp90 chaperone machinery. This is Serine/threonine-protein phosphatase T (PPT1) from Saccharomyces cerevisiae (strain ATCC 204508 / S288c) (Baker's yeast).